A 323-amino-acid polypeptide reads, in one-letter code: Secreted frizzled-related protein 3 (323 aa).

An N-terminal signal peptide occupies residues 1 to 32; the sequence is MVCCGPGRMLLGWAGLLVLAALCLLQVPGAQA. Residues 33–150 enclose the FZ domain; sequence AACEPVRIPL…VYDRGVCISP (118 aa). Intrachain disulfides connect Cys-35–Cys-96, Cys-43–Cys-89, Cys-80–Cys-119, Cys-108–Cys-147, and Cys-112–Cys-136. The N-linked (GlcNAc...) asparagine glycan is linked to Asn-49. The NTR domain maps to 178-298; the sequence is CKCKPVRATQ…WDMKLRHLGL (121 aa). The disordered stretch occupies residues 299–323; the sequence is GKTDASDSTQNQKSGRNSNPRPARS. Residues 304 to 323 show a composition bias toward polar residues; it reads SDSTQNQKSGRNSNPRPARS.

The protein belongs to the secreted frizzled-related protein (sFRP) family. In terms of assembly, interacts with MYOC. As to expression, expressed in kidney, brain, testis. Weak expression in spleen and heart.

Its subcellular location is the secreted. Soluble frizzled-related proteins (sFRPS) function as modulators of Wnt signaling through direct interaction with Wnts. They have a role in regulating cell growth and differentiation in specific cell types. SFRP3/FRZB appears to be involved in limb skeletogenesis. Antagonist of Wnt8 signaling. Regulates chondrocyte maturation and long bone development. This chain is Secreted frizzled-related protein 3 (Frzb), found in Mus musculus (Mouse).